The primary structure comprises 356 residues: MHKVLAIETSCDETSVSIVSNIGDTFRIHSNIIASQIEDHSKWGGVVPELAARKHLELLPFVLDKALEEAKIKIEEVDYIASTVAPGLVGCLRVGSITARSLCMLHSKPFLGIHHLEGHLSSILFSENYPKKSFLTLLVSGGHTELIKVDDSRGMQRLGKSFDDAAGEAFDKVGRLLGLSYPGGPAIEKIAKNGDPMKFNLPKCKISDKKGGFLKYDFSFSGLKTAVLRLVERINLTGKTVPIPDIAASFERVVAEVLVDRTIKCAQDHSLDTVVVVGGVAANNTLRKMMISEASKKSIKVHLAPLDLCTDNAAMIGAAALFRIKFKDHFSSLKLGVAGRLSIEQADNLYEETPPF.

Fe cation is bound by residues H115 and H119. Substrate-binding positions include 138–142 (LVSGG), D171, G184, and N283. D311 is a binding site for Fe cation.

The protein belongs to the KAE1 / TsaD family. Requires Fe(2+) as cofactor.

It is found in the cytoplasm. It carries out the reaction L-threonylcarbamoyladenylate + adenosine(37) in tRNA = N(6)-L-threonylcarbamoyladenosine(37) in tRNA + AMP + H(+). In terms of biological role, required for the formation of a threonylcarbamoyl group on adenosine at position 37 (t(6)A37) in tRNAs that read codons beginning with adenine. Is involved in the transfer of the threonylcarbamoyl moiety of threonylcarbamoyl-AMP (TC-AMP) to the N6 group of A37, together with TsaE and TsaB. TsaD likely plays a direct catalytic role in this reaction. This chain is tRNA N6-adenosine threonylcarbamoyltransferase, found in Prochlorococcus marinus (strain AS9601).